Consider the following 434-residue polypeptide: Xylose isomerase (434 aa).

Catalysis depends on residues His-100 and Asp-103. Mg(2+) contacts are provided by Glu-231, Glu-267, His-270, Asp-295, Asp-306, Asp-308, and Asp-338.

The protein belongs to the xylose isomerase family. As to quaternary structure, homotetramer. Requires Mg(2+) as cofactor.

The protein localises to the cytoplasm. The enzyme catalyses alpha-D-xylose = alpha-D-xylulofuranose. This Ruegeria pomeroyi (strain ATCC 700808 / DSM 15171 / DSS-3) (Silicibacter pomeroyi) protein is Xylose isomerase.